The primary structure comprises 404 residues: V-set and immunoglobulin domain-containing protein 1 (404 aa).

The N-terminal stretch at 1-22 is a signal peptide; sequence MMVFAFWKVFLILNCLAGQVNM. Positions 23–133 constitute an Ig-like V-type domain; that stretch reads VQVTIPDTFV…DFFGKNQGIL (111 aa). At 23-233 the chain is on the extracellular side; that stretch reads VQVTIPDTFV…EIDLTSSDPE (211 aa). Asn39 carries N-linked (GlcNAc...) asparagine glycosylation. Cystine bridges form between Cys44–Cys117 and Cys162–Cys212. An Ig-like C2-type domain is found at 141–228; that stretch reads PSKPFCSIQG…GNSSCEIDLT (88 aa). Asn201 and Asn220 each carry an N-linked (GlcNAc...) asparagine glycan. The chain crosses the membrane as a helical span at residues 234–254; that stretch reads VGIIIGALVGALTGAAIIICV. Over 255-404 the chain is Cytoplasmic; that stretch reads VYFARNKVKS…REEEKETVKA (150 aa). Disordered regions lie at residues 266 to 285 and 298 to 404; these read QKNL…HHSR and EGTL…TVKA. Phosphoserine is present on residues Ser271 and Ser272. Residues 301–314 show a composition bias toward polar residues; that stretch reads LPSSIHASHNTEPT. A compositionally biased stretch (acidic residues) spans 357–383; the sequence is MELEPETEPEPEPEPEPQPELESELEP. Basic and acidic residues predominate over residues 393–404; it reads PMREEEKETVKA.

The protein resides in the membrane. This Rattus norvegicus (Rat) protein is V-set and immunoglobulin domain-containing protein 1 (Vsig1).